The chain runs to 225 residues: Probable proteasome subunit beta type-6 (225 aa).

The protein belongs to the peptidase T1B family. As to quaternary structure, the 26S proteasome consists of a 20S proteasome core and two 19S regulatory subunits. The 20S proteasome core is composed of 28 subunits that are arranged in four stacked rings, resulting in a barrel-shaped structure. The two end rings are each formed by seven alpha subunits, and the two central rings are each formed by seven beta subunits. The catalytic chamber with the active sites is on the inside of the barrel.

It localises to the cytoplasm. Its subcellular location is the nucleus. Functionally, non-catalytic component of the proteasome, a multicatalytic proteinase complex which is characterized by its ability to cleave peptides with Arg, Phe, Tyr, Leu, and Glu adjacent to the leaving group at neutral or slightly basic pH. The proteasome has an ATP-dependent proteolytic activity. This Schizosaccharomyces pombe (strain 972 / ATCC 24843) (Fission yeast) protein is Probable proteasome subunit beta type-6 (pam1).